A 207-amino-acid chain; its full sequence is Urease accessory protein UreG (207 aa).

14–21 contacts GTP; the sequence is GPVGSGKT.

Belongs to the SIMIBI class G3E GTPase family. UreG subfamily. As to quaternary structure, homodimer. UreD, UreF and UreG form a complex that acts as a GTP-hydrolysis-dependent molecular chaperone, activating the urease apoprotein by helping to assemble the nickel containing metallocenter of UreC. The UreE protein probably delivers the nickel.

It localises to the cytoplasm. In terms of biological role, facilitates the functional incorporation of the urease nickel metallocenter. This process requires GTP hydrolysis, probably effectuated by UreG. This is Urease accessory protein UreG from Tolumonas auensis (strain DSM 9187 / NBRC 110442 / TA 4).